Here is a 486-residue protein sequence, read N- to C-terminus: Probable glucan endo-1,3-beta-glucosidase eglC (486 aa).

The signal sequence occupies residues 1–18 (MQLTQLLALALSLATSEA). The N-linked (GlcNAc...) asparagine glycan is linked to asparagine 84. The active-site Proton donor is glutamate 128. Residue asparagine 183 is glycosylated (N-linked (GlcNAc...) asparagine). The Nucleophile role is filled by glutamate 239. Asparagine 315, asparagine 386, asparagine 396, and asparagine 404 each carry an N-linked (GlcNAc...) asparagine glycan. Residues 330-458 (AAAGGVAGGS…SSGAASPSST (129 aa)) form a disordered region. Low complexity-rich tracts occupy residues 341–404 (GSAS…HGSN) and 413–424 (SVSNVSPSKSSS). The span at 430 to 442 (AATSMGASPSSVG) shows a compositional bias: polar residues. Residues 445-458 (GPSKSSGAASPSST) show a composition bias toward low complexity. Glycine 463 carries the GPI-anchor amidated glycine lipid modification. Positions 464–486 (AATSVSAPVVHVVLLALMMVIAA) are cleaved as a propeptide — removed in mature form.

Belongs to the glycosyl hydrolase 17 family. In terms of processing, the GPI-anchor is attached to the protein in the endoplasmic reticulum and serves to target the protein to the cell surface. There, the glucosamine-inositol phospholipid moiety is cleaved off and the GPI-modified mannoprotein is covalently attached via its lipidless GPI glycan remnant to the 1,6-beta-glucan of the outer cell wall layer.

The protein resides in the cell membrane. The protein localises to the secreted. It localises to the cell wall. It catalyses the reaction Hydrolysis of (1-&gt;3)-beta-D-glucosidic linkages in (1-&gt;3)-beta-D-glucans.. In terms of biological role, glucanases play a role in cell expansion during growth, in cell-cell fusion during mating, and in spore release during sporulation. This enzyme may be involved in beta-glucan degradation and also function biosynthetically as a transglycosylase. In Aspergillus terreus (strain NIH 2624 / FGSC A1156), this protein is Probable glucan endo-1,3-beta-glucosidase eglC (eglC).